The sequence spans 252 residues: Probable endonuclease 4 (252 aa).

Residues His-56, His-96, Glu-129, Asp-162, His-165, His-191, Asp-204, His-206, and Glu-233 each coordinate Zn(2+).

The protein belongs to the AP endonuclease 2 family. Zn(2+) is required as a cofactor.

The catalysed reaction is Endonucleolytic cleavage to 5'-phosphooligonucleotide end-products.. Endonuclease IV plays a role in DNA repair. It cleaves phosphodiester bonds at apurinic or apyrimidinic (AP) sites, generating a 3'-hydroxyl group and a 5'-terminal sugar phosphate. The protein is Probable endonuclease 4 of Mycobacterium tuberculosis (strain ATCC 25177 / H37Ra).